Reading from the N-terminus, the 427-residue chain is Rhodocoxin reductase (427 aa).

2 to 34 (SIVIIGSGQAGFEAAVSLRSHGFSGTITLVGDE) is a binding site for FAD. 144–172 (SLVVIGAGFIGLEVAAAARKKGLDVTVVE) is an NAD(+) binding site.

Belongs to the FAD-dependent oxidoreductase family. FAD serves as cofactor.

Its function is as follows. The degradation of the thiocarbamate herbicide EPTC by cytochrome CYP116 (thcB) requires the participation of a flavoprotein, rhodocoxin reductase, and an iron-sulfur protein, rhodocoxin, to mediate the transfer of electrons from NADH to P450 for oxygen activation. The chain is Rhodocoxin reductase (thcD) from Rhodococcus erythropolis (Arthrobacter picolinophilus).